The chain runs to 298 residues: MSYKSGFVSIVGRPNVGKSTLLNQVVGTKIAIMSDKPQTTRNKIRAVLTSEKGQIIFIDTPGVQKPRNKLGEFMLKQALTSLDEVDVLLYVVEANSPIGPQENYLLKTLAEVKTPIILVVNKIDVVKMIEAQTLARQIESRLKVAKTYYISALNGTGVSELVEGIFELLPEGPPYYPEGQVTDYPERFIIAEYIREQILHLTREEIPHSVAVVVEEIKPRENSNTVYVSAVIYVERESQKGIIIGKNGQMLKEIGQRARLEIERLLGSNIYLDLWVKVKEDWRNKDVWIRNFGFTEFE.

Positions 4–171 (KSGFVSIVGR…VEGIFELLPE (168 aa)) constitute an Era-type G domain. The tract at residues 12-19 (GRPNVGKS) is G1. GTP is bound at residue 12–19 (GRPNVGKS). Residues 38-42 (QTTRN) are G2. Positions 59–62 (DTPG) are G3. Residues 59 to 63 (DTPGV) and 121 to 124 (NKID) contribute to the GTP site. Positions 121 to 124 (NKID) are G4. Positions 150–152 (ISA) are G5. The KH type-2 domain occupies 202–280 (TREEIPHSVA…YLDLWVKVKE (79 aa)).

It belongs to the TRAFAC class TrmE-Era-EngA-EngB-Septin-like GTPase superfamily. Era GTPase family. As to quaternary structure, monomer.

The protein localises to the cytoplasm. The protein resides in the cell membrane. Its function is as follows. An essential GTPase that binds both GDP and GTP, with rapid nucleotide exchange. Plays a role in 16S rRNA processing and 30S ribosomal subunit biogenesis and possibly also in cell cycle regulation and energy metabolism. The sequence is that of GTPase Era from Carboxydothermus hydrogenoformans (strain ATCC BAA-161 / DSM 6008 / Z-2901).